We begin with the raw amino-acid sequence, 363 residues long: Probable iron/ascorbate oxidoreductase DDB_G0283291 (363 aa).

The Fe2OG dioxygenase domain maps to 197–306; that stretch reads IFNYPSIISS…RISFPLFFDP (110 aa). Histidine 230, aspartate 232, and histidine 286 together coordinate Fe cation. Residue arginine 297 coordinates 2-oxoglutarate.

Belongs to the iron/ascorbate-dependent oxidoreductase family. It depends on Fe(2+) as a cofactor.

The protein is Probable iron/ascorbate oxidoreductase DDB_G0283291 of Dictyostelium discoideum (Social amoeba).